A 442-amino-acid chain; its full sequence is UDP-N-acetylmuramate--L-alanine ligase (442 aa).

Residue 109 to 115 coordinates ATP; it reads GAHGKTS.

The protein belongs to the MurCDEF family.

Its subcellular location is the cytoplasm. It carries out the reaction UDP-N-acetyl-alpha-D-muramate + L-alanine + ATP = UDP-N-acetyl-alpha-D-muramoyl-L-alanine + ADP + phosphate + H(+). It functions in the pathway cell wall biogenesis; peptidoglycan biosynthesis. Cell wall formation. In Streptococcus pyogenes serotype M2 (strain MGAS10270), this protein is UDP-N-acetylmuramate--L-alanine ligase.